The following is a 505-amino-acid chain: Glycerol kinase (505 aa).

Residue threonine 14 participates in ADP binding. ATP contacts are provided by threonine 14, threonine 15, and serine 16. Residue threonine 14 coordinates sn-glycerol 3-phosphate. Arginine 18 serves as a coordination point for ADP. Sn-glycerol 3-phosphate-binding residues include arginine 84, glutamate 85, tyrosine 136, and aspartate 246. Residues arginine 84, glutamate 85, tyrosine 136, aspartate 246, and glutamine 247 each contribute to the glycerol site. ADP is bound by residues threonine 268 and glycine 311. ATP contacts are provided by threonine 268, glycine 311, glutamine 315, and glycine 412. Residues glycine 412 and asparagine 416 each contribute to the ADP site.

It belongs to the FGGY kinase family.

The enzyme catalyses glycerol + ATP = sn-glycerol 3-phosphate + ADP + H(+). It participates in polyol metabolism; glycerol degradation via glycerol kinase pathway; sn-glycerol 3-phosphate from glycerol: step 1/1. Its activity is regulated as follows. Inhibited by fructose 1,6-bisphosphate (FBP). Functionally, key enzyme in the regulation of glycerol uptake and metabolism. Catalyzes the phosphorylation of glycerol to yield sn-glycerol 3-phosphate. This chain is Glycerol kinase, found in Vibrio vulnificus (strain CMCP6).